The chain runs to 490 residues: N-succinylglutamate 5-semialdehyde dehydrogenase (490 aa).

An NAD(+)-binding site is contributed by Gly-223 to Gly-228. Catalysis depends on residues Glu-246 and Cys-280.

Belongs to the aldehyde dehydrogenase family. AstD subfamily.

It catalyses the reaction N-succinyl-L-glutamate 5-semialdehyde + NAD(+) + H2O = N-succinyl-L-glutamate + NADH + 2 H(+). It functions in the pathway amino-acid degradation; L-arginine degradation via AST pathway; L-glutamate and succinate from L-arginine: step 4/5. Its function is as follows. Catalyzes the NAD-dependent reduction of succinylglutamate semialdehyde into succinylglutamate. The chain is N-succinylglutamate 5-semialdehyde dehydrogenase from Pseudoalteromonas atlantica (strain T6c / ATCC BAA-1087).